The primary structure comprises 154 residues: Protein X (154 aa).

The tract at residues 68-117 (PCALRFTSARCMETTVNAPRNLPKVLHKRTLGLSAMSTTKIETYFKDCVF) is mitochondrial targeting sequence.

It belongs to the orthohepadnavirus protein X family. In terms of assembly, may form homodimer. May interact with host CEBPA, CFLAR, CREB1, DDB1, E4F1, HBXIP, HSPD1/HSP60, NFKBIA, POLR2E and SMAD4. Interacts with host SMC5-SMC6 complex and induces its degradation. Interacts with host TRPC4AP; leading to prevent ubiquitination of TRPC4AP. Interacts with host PLSCR1; this interaction promotes ubiquitination and degradation of HBx and impairs HBx-mediated cell proliferation. A fraction may be phosphorylated in insect cells and HepG2 cells, a human hepatoblastoma cell line. Phosphorylated in vitro by host protein kinase C or mitogen-activated protein kinase. N-acetylated in insect cells.

The protein resides in the host cytoplasm. The protein localises to the host nucleus. Its subcellular location is the host mitochondrion. Functionally, multifunctional protein that plays a role in silencing host antiviral defenses and promoting viral transcription. Does not seem to be essential for HBV infection. May be directly involved in development of cirrhosis and liver cancer (hepatocellular carcinoma). Most of cytosolic activities involve modulation of cytosolic calcium. The effect on apoptosis is controversial depending on the cell types in which the studies have been conducted. May induce apoptosis by localizing in mitochondria and causing loss of mitochondrial membrane potential. May also modulate apoptosis by binding host CFLAR, a key regulator of the death-inducing signaling complex (DISC). Promotes viral transcription by using the host E3 ubiquitin ligase DDB1 to target the SMC5-SMC6 complex to proteasomal degradation. This host complex would otherwise bind to viral episomal DNA, and prevents its transcription. Moderately stimulates transcription of many different viral and cellular transcription elements. Promoters and enhancers stimulated by HBx contain DNA binding sites for NF-kappa-B, AP-1, AP-2, c-EBP, ATF/CREB, or the calcium-activated factor NF-AT. The chain is Protein X from Chimpanzee hepatitis B virus (isolate United Kingdom/LSH/1988) (HBVcpz).